Reading from the N-terminus, the 304-residue chain is DCN1-like protein 3 (304 aa).

Disordered regions lie at residues 1 to 86 and 284 to 304; these read MGQC…AEES and EGEG…EEQT. Gly2 carries N-myristoyl glycine lipidation. Residues 86–278 enclose the DCUN1 domain; it reads SSLQRLEELF…LFDTFVEWEM (193 aa).

As to quaternary structure, part of a complex containing DCUN1D3, CUL3 and RBX1. Interacts (via the DCUN1 domain) with the unneddylated cullins: interacts with CUL1, CUL2, CUL3, CUL4A, CUL4B and CUL5; these interactions promote the cullin neddylation and the identity of the cullin dictates the affinity of the interaction. Interacts preferentially with CUL3; this interaction triggers the relocalization of CUL3 to the cell membrane where CUL3 is neddylated. Interacts (via DCUN1 domain) with RBX1. May also interact with regulators or subunits of cullin-RING ligases such as RNF7, ELOB and DDB1; these interactions are bridged by cullins. Interacts (via DCUN1 domain) with CAND1; this interaction is bridged by cullins and strongly inhibits cullin neddylation. These CAND-cullin-DCNL complexes can only be neddylated in the presence of a substrate adapter. Interacts (via DCUN1 domain) with the N-terminally acetylated form of UBE2M and UBE2F. In terms of tissue distribution, tends to be down-regulated in different type of cancers, including lung neuroendocrine carcinoma, thyroid Huerthle cell carcinoma and lung squamous cell carcinoma. Mostly expressed in testis and brain. Highly expressed in liver, bladder and renal normal tissue than their tumor tissue counterparts. Palmitoylation stabilizes DCUN1D3 at the cell membrane.

The protein resides in the cell membrane. It localises to the cytoplasm. It is found in the nucleus. The protein localises to the perinuclear region. Functionally, contributes to the neddylation of all cullins by transferring NEDD8 from N-terminally acetylated NEDD8-conjugating E2s enzyme to different cullin C-terminal domain-RBX complexes and may play a role in the cell cycle progression by regulating the SCF ubiquitin E3 ligase complex, after UV damage. At the cell membrane, can promote and as well inhibit cullins neddylation. The sequence is that of DCN1-like protein 3 from Homo sapiens (Human).